Consider the following 676-residue polypeptide: Solute carrier family 26 member 10 (676 aa).

Residues 1–24 (MSGPLASGTCSDPEEVSDLKSPLS) form a disordered region. 11 helical membrane-spanning segments follow: residues 101-121 (AVAGVTVGVVHVPQGMAFALL), 124-144 (VPPVFGLYTSFFPVLIYSLLG), 149-165 (LSTGTFAVLSLMTGSVV), 190-210 (VGAAAAVAFGSGALMLGMFVL), 226-246 (ALTSGAALHVLVSQLPSLLGL), 267-287 (ALSQSSPAEVTISALSLVLLV), 300-320 (LLTPIPGEVVMVLLATVLCFT), 353-373 (ILADSLPISLVTFAVSTSLAS), 398-418 (ISSLFSCFPNSATLATTSLLV), 426-446 (LAGLFSCAVVLAALLWLRPFF), and 487-507 (IVTWVAVVTLNVDLGLAVGVV). Positions 539–660 (ESRKLLQVPG…VSVQDAAAHA (122 aa)) constitute an STAS domain.

The protein belongs to the SLC26A/SulP transporter (TC 2.A.53) family.

It localises to the membrane. Its function is as follows. Chloride/bicarbonate exchanger. This Mus musculus (Mouse) protein is Solute carrier family 26 member 10 (Slc26a10).